The sequence spans 158 residues: Probable host range protein 2-1 (158 aa).

It belongs to the poxviridae C7 protein family.

In terms of biological role, plays a role for multiplication of the virus in different cell types. The protein is Probable host range protein 2-1 of Rabbit fibroma virus (strain Kasza) (RFV).